A 608-amino-acid chain; its full sequence is MQFQTEVNQLLQLMIHSLYSNKEIFLRELISNASDALDKLNFLSVSDDKYKSLKFEPKIEIKIDKDKKTLSISDNGIGMDKDDLINNLGTIAKSGTKSFLENLSGDAKKDSQLIGQFGVGFYSAFMVASKIEVLSKKALDDKAYLWSSDANGYEINDANKEEQGTSITLYLKDDEFANTYKIESIIEKYSNHIQFPIFMEKEEFTPAKEGEEEGKTELKISQINKANALWRMQKSSLKVEDYERFYEQNFHDSNKPLLYLHTKSEGKLEYNSLFFIPQNAPFDLFRVDYQSGLKLYVKRVFISDDDKELLPTYLRFVRGIIDVEDLPLNVSREILQENQILKGVKEASVKKILGELEKLKNNDKEKYLSFFKTFGKVLKEGLYGFGGEKDSLLKLMLYKSTKGENLRSLEEYKNDLQGEQKEIFYIAGNNESLLRTSPLLEEYKQKNIEVLLMDDEIDSLVTPMLEFEGLKFVAINQVEDKNELSDEEKNTFAPLVAKFKELLKDQVEDVRLTSRLKDSPSCIVYDKNKPDFAMQQLLKQMGQEQNFKPILEINPKHAIFTGLKNNESFSADIATLVLNMAKLSEGMGVDNPAEFNASLTKIINKAFS.

Residues 1–332 (MQFQTEVNQL…VEDLPLNVSR (332 aa)) form an a; substrate-binding region. The b stretch occupies residues 333–536 (EILQENQILK…KNKPDFAMQQ (204 aa)). The interval 537-608 (LLKQMGQEQN…LTKIINKAFS (72 aa)) is c.

The protein belongs to the heat shock protein 90 family. As to quaternary structure, homodimer.

It localises to the cytoplasm. Its function is as follows. Molecular chaperone. Has ATPase activity. The protein is Chaperone protein HtpG of Campylobacter jejuni subsp. jejuni serotype O:6 (strain 81116 / NCTC 11828).